A 492-amino-acid polypeptide reads, in one-letter code: Protein PAIR1 (492 aa).

Residues 166–186 (VDSVQSDVMQLNRAMKEASLD) adopt a coiled-coil conformation. The Nuclear localization signal motif lies at 479 to 483 (KRRRR).

In terms of assembly, interacts with CRC1. In terms of tissue distribution, expressed in reproductive organs, but not in vegetative organs.

It localises to the nucleus. Its function is as follows. Involved in spore formation. Plays an essential role in the establishment of homologous chromosome pairing in early meiosis. The polypeptide is Protein PAIR1 (PAIR1) (Oryza sativa subsp. japonica (Rice)).